The sequence spans 397 residues: Fractalkine (397 aa).

An N-terminal signal peptide occupies residues 1–24; sequence MAPISLSWLLRLATFCHLTVLLAG. The chemokine and involved in interaction with ITGAV:ITGB3 and ITGA4:ITGB1 stretch occupies residues 25–100; sequence QHHGVTKCNI…RQAAALTRNG (76 aa). Over 25 to 341 the chain is Extracellular; the sequence is QHHGVTKCNI…PDAQAATRRQ (317 aa). 2 disulfide bridges follow: cysteine 32/cysteine 58 and cysteine 36/cysteine 74. Asparagine 33 carries N-linked (GlcNAc...) asparagine glycosylation. The tract at residues 101–341 is mucin-like stalk; that stretch reads GTFEKQIGEV…PDAQAATRRQ (241 aa). Disordered regions lie at residues 128-265 and 289-309; these read EPEA…REEM and VPVSSEGTPSREPVASGSWTP. Residues 133–147 are compositionally biased toward polar residues; it reads GESSSLEPTPSSQEA. Threonine 183 is a glycosylation site (O-linked (GalNAc...) threonine). Over residues 193-202 the composition is skewed to polar residues; the sequence is TAATWQSSAP. Residues 219 to 243 are compositionally biased toward low complexity; sequence PSTQDPSTQASTASSPAPEENAPSE. Serine 253 is a glycosylation site (O-linked (GalNAc...) serine). A glycan (O-linked (GalNAc...) threonine) is linked at threonine 329. A helical transmembrane segment spans residues 342–362; it reads AVGLLAFLGLLFCLGVAMFTY. Topologically, residues 363-397 are cytoplasmic; it reads QSLQGCPRKMAGEMAEGLRYIPRSCGSNSYVLVPV.

Belongs to the intercrine delta family. Monomer. Forms a ternary complex with CX3CR1 and ITGAV:ITGB3 or ITGA4:ITGB1. As to quaternary structure, (Microbial infection) Interacts with pox virus crmD; this inhibits cell migration mediated by CX3CL1. In terms of assembly, (Microbial infection) Interacts (via N-terminus) with human cytomegalovirus (HHV-5) US28. (Microbial infection) Interacts with P.falciparum (strain 3D7) CBP1 and CBP2 (via their extracellular domains); the interaction mediates the adhesion of infected erythrocytes with endothelial cells. Post-translationally, a soluble short 95 kDa form may be released by proteolytic cleavage from the long membrane-anchored form. In terms of processing, O-glycosylated with core 1 or possibly core 8 glycans. Expressed in the seminal plasma, endometrial fluid and follicular fluid (at protein level). Small intestine, colon, testis, prostate, heart, brain, lung, skeletal muscle, kidney and pancreas. Most abundant in the brain and heart.

It localises to the cell membrane. The protein localises to the secreted. Its function is as follows. Chemokine that acts as a ligand for both CX3CR1 and integrins ITGAV:ITGB3 and ITGA4:ITGB1. The CX3CR1-CX3CL1 signaling exerts distinct functions in different tissue compartments, such as immune response, inflammation, cell adhesion and chemotaxis. Regulates leukocyte adhesion and migration processes at the endothelium. Can activate integrins in both a CX3CR1-dependent and CX3CR1-independent manner. In the presence of CX3CR1, activates integrins by binding to the classical ligand-binding site (site 1) in integrins. In the absence of CX3CR1, binds to a second site (site 2) in integrins which is distinct from site 1 and enhances the binding of other integrin ligands to site 1. The soluble form is chemotactic for T-cells and monocytes, but not for neutrophils. In terms of biological role, the membrane-bound form promotes adhesion of those leukocytes to endothelial cells. Functionally, (Microbial infection) Mediates the cytoadherence of erythrocytes infected with parasite P.falciparum (strain 3D7) with endothelial cells by interacting with P.falciparum CBP1 and CBP2 expressed at the surface of erythrocytes. The adhesion prevents the elimination of infected erythrocytes by the spleen. In Homo sapiens (Human), this protein is Fractalkine.